The following is a 296-amino-acid chain: MSKVGVIGAGKWGSALAFALSEKCEVYITSRTPRDMKNFVSLEEILRLEYLVIAIPAQQVSSWLREHFIYNNHKVLVAAKGIEATSGKFLNEIYEEHVPNEKIAFLSGPSFATEVMKSLPTALVINSINEELSAEFACFFPSFIKTYTSTDIAGAEVAGAYKNVIAIAAGICEGLGLGKNAAASLISRGLVEMQRFGKVYGAKDESFIGLSGAGDLFLTASSTMSRNFRVGLGIAEGKSKEQIVEELGEVAEGIGTTYALYSIAKEKDLYLPIAREVYYMLEGLDPHVSLRNFLSN.

Residues W12, R31, and K80 each contribute to the NADPH site. Sn-glycerol 3-phosphate is bound by residues K80, G108, and S110. Position 112 (A112) interacts with NADPH. Sn-glycerol 3-phosphate is bound by residues K162, D215, S225, R226, and N227. K162 functions as the Proton acceptor in the catalytic mechanism. An NADPH-binding site is contributed by R226. NADPH is bound by residues V250 and E252.

The protein belongs to the NAD-dependent glycerol-3-phosphate dehydrogenase family.

It localises to the cytoplasm. It carries out the reaction sn-glycerol 3-phosphate + NAD(+) = dihydroxyacetone phosphate + NADH + H(+). It catalyses the reaction sn-glycerol 3-phosphate + NADP(+) = dihydroxyacetone phosphate + NADPH + H(+). It functions in the pathway membrane lipid metabolism; glycerophospholipid metabolism. Catalyzes the reduction of the glycolytic intermediate dihydroxyacetone phosphate (DHAP) to sn-glycerol 3-phosphate (G3P), the key precursor for phospholipid synthesis. This Sulfurimonas denitrificans (strain ATCC 33889 / DSM 1251) (Thiomicrospira denitrificans (strain ATCC 33889 / DSM 1251)) protein is Glycerol-3-phosphate dehydrogenase [NAD(P)+].